A 606-amino-acid polypeptide reads, in one-letter code: Vacuolar calcium ion transporter (606 aa).

Residues 1-110 form a disordered region; the sequence is MSPPRRVSFP…NSLDPNPGLM (110 aa). Over 1-137 the chain is Cytoplasmic; that stretch reads MSPPRRVSFP…PTYWGSMKAA (137 aa). Over residues 18–30 the composition is skewed to low complexity; sequence PPLADSPLSSPKL. The span at 36–56 shows a compositional bias: polar residues; that stretch reads QSSSTPIVSSNLPTDTTNSAS. A helical transmembrane segment spans residues 138–158; sequence ITSTWLNVLLVFIPIGWALYL. The Vacuolar portion of the chain corresponds to 159-170; the sequence is AKHNGGKDSISD. A helical membrane pass occupies residues 171 to 191; the sequence is TAVFCCTFIAIIPLAGLLGFA. At 192–204 the chain is on the cytoplasmic side; the sequence is TEEAALRLGQTLG. The chain crosses the membrane as a helical span at residues 205-225; it reads GLLNATLGNAVELIVAILALI. The Vacuolar segment spans residues 226-236; the sequence is KCELQVVQSSL. A helical transmembrane segment spans residues 237–257; the sequence is VGSILSNILLVLGMCFFAGGV. The Cytoplasmic portion of the chain corresponds to 258-272; the sequence is RFAEQAIKSTAAQLN. Residues 273-293 form a helical membrane-spanning segment; it reads ASLLLIAVIAVLIPSAFHFSI. The Vacuolar segment spans residues 294 to 313; the sequence is SSSTSNTDASELANGEGADL. A helical membrane pass occupies residues 314-334; the sequence is LSMSHAVSILLLILYLGYLLF. Residues 335-437 are Cytoplasmic-facing; the sequence is QMWTHATYYV…EEEEETPQMN (103 aa). Residues 376–434 are disordered; that stretch reads DEEESYSTATTVSDAAVPPSARAEGGEVPATHGPGTAAAETGNRVEHEDAEEEEEEETP. A compositionally biased stretch (acidic residues) spans 423–433; sequence EDAEEEEEEET. A helical membrane pass occupies residues 438 to 458; that stretch reads VVCTIALMVIDTVLVGVTAEF. Over 459 to 477 the chain is Vacuolar; the sequence is LVDSINGMVESNPSLSAEW. Residues 478 to 498 traverse the membrane as a helical segment; it reads VGLILLPIVGNAAEHFTAVSV. At 499–505 the chain is on the cytoplasmic side; sequence SVKDKLD. A helical membrane pass occupies residues 506–526; the sequence is LSISVAVGSSIQIALFVIPVI. At 527 to 535 the chain is on the vacuolar side; the sequence is ELLAWTIGK. Residues 536 to 556 traverse the membrane as a helical segment; it reads PMTLLFDPYESIVLFLSVLIV. At 557–566 the chain is on the cytoplasmic side; it reads NQTLADGRSN. A helical membrane pass occupies residues 567–587; sequence WMEGMVLMMLYIIIAVSFWYY. The Vacuolar segment spans residues 588-606; the sequence is PGSTTATLLGCQDSSSVTG.

The protein belongs to the Ca(2+):cation antiporter (CaCA) (TC 2.A.19) family.

It is found in the vacuole membrane. In terms of biological role, has a role in promoting intracellular calcium ion sequestration via the exchange of calcium ions for hydrogen ions across the vacuolar membrane. This Cryptococcus neoformans var. grubii serotype A (strain H99 / ATCC 208821 / CBS 10515 / FGSC 9487) (Filobasidiella neoformans var. grubii) protein is Vacuolar calcium ion transporter.